Consider the following 348-residue polypeptide: Uroporphyrinogen decarboxylase (348 aa).

Substrate contacts are provided by residues 28-32, D78, Y154, T209, and H325; that span reads RQAGR.

It belongs to the uroporphyrinogen decarboxylase family. Homodimer.

It localises to the cytoplasm. The enzyme catalyses uroporphyrinogen III + 4 H(+) = coproporphyrinogen III + 4 CO2. Its pathway is porphyrin-containing compound metabolism; protoporphyrin-IX biosynthesis; coproporphyrinogen-III from 5-aminolevulinate: step 4/4. Catalyzes the decarboxylation of four acetate groups of uroporphyrinogen-III to yield coproporphyrinogen-III. This Rhodopseudomonas palustris (strain HaA2) protein is Uroporphyrinogen decarboxylase.